The primary structure comprises 510 residues: Archaeal glutamate synthase [NADPH] (510 aa).

4Fe-4S ferredoxin-type domains lie at 10-37 and 38-68; these read YKVE…YRRE and GDRI…IKEN. [4Fe-4S] cluster is bound by residues cysteine 19, cysteine 22, cysteine 25, cysteine 29, cysteine 48, cysteine 51, cysteine 54, and cysteine 58.

It belongs to the glutamate synthase family. It depends on FMN as a cofactor.

It carries out the reaction 2 L-glutamate + NADP(+) = L-glutamine + 2-oxoglutarate + NADPH + H(+). The protein is Archaeal glutamate synthase [NADPH] of Methanocaldococcus jannaschii (strain ATCC 43067 / DSM 2661 / JAL-1 / JCM 10045 / NBRC 100440) (Methanococcus jannaschii).